The sequence spans 401 residues: O-antigen ligase (401 aa).

Topologically, residues 1–20 (MFAATRLSRLRHDTSRILSH) are cytoplasmic. Residues 21–37 (WILPLGWLALLTGMFWV) form a helical membrane-spanning segment. Over 38 to 42 (GDRSD) the chain is Periplasmic. Residues 43-61 (YHRLFYILLAAPTLLYVIL) form a helical membrane-spanning segment. The Cytoplasmic segment spans residues 62–72 (QPRLLRPLTGS). A helical transmembrane segment spans residues 73–92 (PLFIAFLAFSSYMMLSLSWS). Residues 93–103 (TPENSTGSLLK) lie on the Periplasmic side of the membrane. Residues 104–122 (RPLYIALLFFCAAILALEA) form a helical membrane-spanning segment. Residues 123-129 (PLRLKTA) are Cytoplasmic-facing. Residues 130-150 (TWLAALGAVISAAATLLRYYW) traverse the membrane as a helical segment. Over 151–161 (DANPLRLTGYG) the chain is Periplasmic. The chain crosses the membrane as a helical span at residues 162-183 (ALYNPLLSAHVYGAFTALWLAY). At 184–189 (WMQSRP) the chain is on the cytoplasmic side. Residues 190-208 (ILAPLPLISLALLGGLLIA) traverse the membrane as a helical segment. At 209-212 (TGSR) the chain is on the periplasmic side. A helical transmembrane segment spans residues 213–229 (TPLVGLTAALMWLVLAG). Topologically, residues 230–234 (DRKKA) are cytoplasmic. The chain crosses the membrane as a helical span at residues 235–252 (LIALALALAGALLGYILY). Residues 253–306 (PEVITQRGASFRPEIWADALRQISEHPWLGHGYDHPMRIVLSNGMLLADPHNIE) lie on the Periplasmic side of the membrane. The tract at residues 258–319 (QRGASFRPEI…LFAGGIIGLL (62 aa)) is WZY-C. A helical membrane pass occupies residues 307 to 331 (LGVLFAGGIIGLLLWVAIYALAFGF). Over 332–339 (SWKNRKSP) the chain is Cytoplasmic. A helical transmembrane segment spans residues 340 to 357 (AVLLASTWLVFGLAAGLT). The Periplasmic portion of the chain corresponds to 358–368 (EGNAFLPRPKE). Residues 369 to 385 (HWFLIWIPMALLYALWI) form a helical membrane-spanning segment. The Cytoplasmic segment spans residues 386-401 (QQRFAASRRGEDIAAP).

It belongs to the O-antigen ligase family. As to quaternary structure, homodimer.

The protein resides in the cell inner membrane. It carries out the reaction a lipid-linked O antigen + a lipid A-core oligosaccharide = a lipopolysaccharide + a polyisoprenyl diphosphate.. It participates in bacterial outer membrane biogenesis; lipopolysaccharide biosynthesis. With respect to regulation, activity does not require ATP and magnesium ions. Functionally, transferase involved in the biosynthesis of the lipopolysaccharide (LPS). Catalyzes the transfer of a polymerized O-antigen molecule from its polyprenyl diphosphate membrane anchor to a terminal sugar of the lipid A-core oligosaccharide, finalizing the biosynthesis of the lipopolysaccharide. Required for the attachment of both A-band and B-band O-antigens, two forms of O-antigen produced by P.aeruginosa, onto the lipid A-core receptors. Important for cell wall integrity and motility of the bacteria. This is O-antigen ligase from Pseudomonas aeruginosa (strain ATCC 15692 / DSM 22644 / CIP 104116 / JCM 14847 / LMG 12228 / 1C / PRS 101 / PAO1).